A 268-amino-acid polypeptide reads, in one-letter code: Probable RNA methyltransferase C2A9.10 (268 aa).

One can recognise a Bin3-type SAM domain in the interval 23 to 258; it reads DPRLKCLPDS…RTMYIYKKKG (236 aa).

This sequence belongs to the methyltransferase superfamily.

In terms of biological role, probable RNA methyltransferase. This is Probable RNA methyltransferase C2A9.10 from Schizosaccharomyces pombe (strain 972 / ATCC 24843) (Fission yeast).